Here is a 206-residue protein sequence, read N- to C-terminus: Ras-related protein ralB-B (206 aa).

Position 21–28 (G21–S28) interacts with GTP. Positions Y43–Y51 match the Effector region motif. Residues D68–Q72 and N128–D131 contribute to the GTP site. Basic and acidic residues predominate over residues K180–G189. The disordered stretch occupies residues K180–L206. Positions K190 to K200 are enriched in basic residues. Cysteine methyl ester is present on C203. C203 carries S-geranylgeranyl cysteine lipidation. A propeptide spans C204–L206 (removed in mature form).

This sequence belongs to the small GTPase superfamily. Ras family. Interacts with ralbp1 and rap1gds1.

The protein localises to the cell membrane. It is found in the midbody. The enzyme catalyses GTP + H2O = GDP + phosphate + H(+). Functionally, multifunctional GTPase involved in a variety of cellular processes including gene expression, cell migration, cell proliferation, oncogenic transformation and membrane trafficking. Accomplishes its multiple functions by interacting with distinct downstream effectors. Acts as a GTP sensor for GTP-dependent exocytosis of dense core vesicles. Required both to stabilize the assembly of the exocyst complex and to localize functional exocyst complexes to the leading edge of migrating cells. Required for suppression of apoptosis. In late stages of cytokinesis, upon completion of the bridge formation between dividing cells, mediates exocyst recruitment to the midbody to drive abscission. Regulates the actin cytoskeleton to play a role in gastrulation or neurulation. During the cleavage stages, the GTP-bound form induces a cortical reaction that affects the localization of pigment granules. Activated by the FGF pathway via ras and ral-GDS, but independently of raf. Directs ralbp1 to the plasma membrane. Involved in ligand-dependent receptor mediated endocytosis of the EGF and insulin receptors. The chain is Ras-related protein ralB-B (ralb-b) from Xenopus laevis (African clawed frog).